The following is a 797-amino-acid chain: MAAAPAAAGAGASRGRRLAATAAAWGGWGGRPRPGNILLQLRQGQLTGRGLVRAVQFTETFLTERDKLSKWSGIPQLLLKLYATSHLHSDFVECQSILKEISPLLSMEAMAFVTEDRKFTQEATYPNTYIFDLFGGVDLLVEILMRPTISIRGQKLKISDEMSKDCLSILYNTCVCTEGVTKRLAEKNDFVIFLFTLMTSKKTFLQTATLIEDILGVKKEMIRLDEVPNLSSLVSNFDQQQLANFCRILAVTISEMDTGNDDKHTLLAKNAQQKKSLSLGPSAAEINQAALLSIPGFVERLCKLATRKVSESTGTASFLQELEEWYTWLDNALVLDALMRVANEESEHNQAPTVFPSLGTSEEGGLPHTSARAQLPQSMKIMHEIMYKLEVLYVLCVLLMGRQRNQVHRMIAEFKLIPGLNNLFDKLIWRKHSASALVLHGHNQNCDCSPDITLKIQFLRLLQSFSDHHENKYLLLNNQELNELSAISLKANIPEVEAVLNTDRSLVCDGKRGLLTRLLQVMKKEPAESSFRFWQARAVESFLRGTTSYADQMFLLKRGLLEHILYCIVDSECKSRDVLQSYFDLLGELMKFNVDAFKRFNKYINTDAKFQVFLKQINSSLVDSNMLVRCVTLSLDRFENQVDMKVAEVLSECRLLAYISQVPTQMSFLFRLINIIHVQTLTQENVSCLNTSLVILMLARRKERLPLYLRLLQRMEHSKKYPGFLLNNFHNLLRFWQQHYLHKDKDSTCLENSSCISFSYWKETVSILLNPDRQSPSALVSYIEEPYMDIDRDFTEE.

Position 2 is an N-acetylalanine (alanine 2). Residues 2-400 (AAAPAAAGAG…VLYVLCVLLM (399 aa)) are interaction with TNFRSF1A.

Component of the DCX(TRPC4AP) E3 ubiquitin ligase complex, at least composed of CUL4A, DDB1, TRPC4AP/TRUSS and RBX1. Interacts with MYC. Constitutively associated with TNFRSF1A. Directly interacts with TRADD, TRAF2, CHUK, IKBKB and IKBKG. Interacts with TRPC1, TRPC4 and TRPC5. Post-translationally, phosphorylated by GSK3B; phosphorylation is required for ubiquitination. In terms of processing, ubiquitinated by a SCF (SKP1-CUL1-F-box protein) E3 ubiquitin-protein ligase containing SKP2, leading to its degradation. Phosphorylation by GSK3B is required for ubiquitination. As to expression, widely expressed, with high levels in heart, liver and testis.

It is found in the cytoplasm. The protein localises to the perinuclear region. It participates in protein modification; protein ubiquitination. Substrate-recognition component of a DCX (DDB1-CUL4-X-box) E3 ubiquitin-protein ligase complex required for cell cycle control. The DCX(TRPC4AP) complex specifically mediates the polyubiquitination and subsequent degradation of MYC as part of the DesCEND (destruction via C-end degrons) pathway. The DesCEND (destruction via C-end degrons) pathway recognizes a C-degron located at the extreme C terminus of target proteins, leading to their ubiquitination and degradation. The DCX(TRPC4AP) complex specifically recognizes proteins with an arginine at the minus 3 position (R-3 motif) at the C-terminus, such as MYC, leading to their ubiquitination and degradation. Also participates in the activation of NFKB1 in response to ligation of TNFRSF1A, possibly by linking TNFRSF1A to the IKK signalosome. Involved in JNK activation via its interaction with TRAF2. Also involved in elevation of endoplasmic reticulum Ca(2+) storage reduction in response to CHRM1. This Mus musculus (Mouse) protein is Short transient receptor potential channel 4-associated protein.